The primary structure comprises 146 residues: Neutral phospholipase A2 B (146 aa).

Positions M1–S21 are cleaved as a signal peptide. The propeptide occupies N22–L27. Disulfide bonds link C38/C98, C53/C145, C55/C71, C70/C126, C77/C119, C87/C112, and C105/C117. The Ca(2+) site is built by Y54, G56, and G58. H74 is an active-site residue. Ca(2+) is bound at residue D75. Residue D120 is part of the active site.

It belongs to the phospholipase A2 family. Group I subfamily. D49 sub-subfamily. Ca(2+) serves as cofactor. Expressed by the venom gland.

It is found in the secreted. The catalysed reaction is a 1,2-diacyl-sn-glycero-3-phosphocholine + H2O = a 1-acyl-sn-glycero-3-phosphocholine + a fatty acid + H(+). Functionally, PLA2 catalyzes the calcium-dependent hydrolysis of the 2-acyl groups in 3-sn-phosphoglycerides. The protein is Neutral phospholipase A2 B of Naja sputatrix (Malayan spitting cobra).